The following is a 252-amino-acid chain: Putative hydro-lyase OB3382 (252 aa).

Belongs to the D-glutamate cyclase family.

This chain is Putative hydro-lyase OB3382, found in Oceanobacillus iheyensis (strain DSM 14371 / CIP 107618 / JCM 11309 / KCTC 3954 / HTE831).